A 227-amino-acid chain; its full sequence is MKVLIPVSPINSLKTRLSEFLSSEERKNLLLNMLRDINKALEGLDVVIISRDEEILEFGKNELKAETIKEKYKGLNKAIKQAFEEIEDDEVIIIPADIPLIKKRHIEDILKLSKDYDVIIAPSRGGGTNLLYLKSKNLIEIKYEGFSFLKHLEEAKKKNLRYYIYDSFLISVDINTPEDLGEIFIHGDSTYTKNYLKGLGIEVESKHSSAGRFVVKRGGDNEVSNPM.

It belongs to the CofC family. Homodimer.

It carries out the reaction (2S)-2-phospholactate + GTP + H(+) = (2S)-lactyl-2-diphospho-5'-guanosine + diphosphate. It functions in the pathway cofactor biosynthesis; coenzyme F420 biosynthesis. Guanylyltransferase that catalyzes the activation of (2S)-2-phospholactate (2-PL) as (2S)-lactyl-2-diphospho-5'-guanosine, via the condensation of 2-PL with GTP. It is involved in the biosynthesis of coenzyme F420, a hydride carrier cofactor. In Methanocaldococcus sp. (strain FS406-22), this protein is 2-phospho-L-lactate guanylyltransferase.